Here is a 357-residue protein sequence, read N- to C-terminus: Probable dual-specificity RNA methyltransferase RlmN (357 aa).

Residue Glu95 is the Proton acceptor of the active site. The region spanning 106 to 340 (NRDRHTVCVS…VSVREEKGTD (235 aa)) is the Radical SAM core domain. Cysteines 113 and 345 form a disulfide. [4Fe-4S] cluster-binding residues include Cys120, Cys124, and Cys127. S-adenosyl-L-methionine contacts are provided by residues 172 to 173 (GE), Ser204, 227 to 229 (SLH), and Asn302. Cys345 functions as the S-methylcysteine intermediate in the catalytic mechanism.

The protein belongs to the radical SAM superfamily. RlmN family. [4Fe-4S] cluster serves as cofactor.

The protein resides in the cytoplasm. The catalysed reaction is adenosine(2503) in 23S rRNA + 2 reduced [2Fe-2S]-[ferredoxin] + 2 S-adenosyl-L-methionine = 2-methyladenosine(2503) in 23S rRNA + 5'-deoxyadenosine + L-methionine + 2 oxidized [2Fe-2S]-[ferredoxin] + S-adenosyl-L-homocysteine. It catalyses the reaction adenosine(37) in tRNA + 2 reduced [2Fe-2S]-[ferredoxin] + 2 S-adenosyl-L-methionine = 2-methyladenosine(37) in tRNA + 5'-deoxyadenosine + L-methionine + 2 oxidized [2Fe-2S]-[ferredoxin] + S-adenosyl-L-homocysteine. Its function is as follows. Specifically methylates position 2 of adenine 2503 in 23S rRNA and position 2 of adenine 37 in tRNAs. This is Probable dual-specificity RNA methyltransferase RlmN from Desulfitobacterium hafniense (strain Y51).